A 398-amino-acid polypeptide reads, in one-letter code: Metalloprotease MmpA (398 aa).

A Zn(2+)-binding site is contributed by H22. Residue E23 is part of the active site. H26 contacts Zn(2+). Transmembrane regions (helical) follow at residues 117–139 (FIAVAGPMANFILAILVFAVILV), 316–338 (QFWLIASLSVSIGFMNLLPIPVL), and 362–381 (AAGFRAGLALILGFMLFAAW). The region spanning 130–203 (AILVFAVILV…MPIDFAVERD (74 aa)) is the PDZ domain.

The protein belongs to the peptidase M50B family. Requires Zn(2+) as cofactor.

Its subcellular location is the cell inner membrane. Its function is as follows. Involved in the regulated intramembrane proteolysis (RIP) of the short isoform of PodJ protein (PodJS), during the swarmer-to-stalked transition. The cleavage occurs near or within the single transmembrane of PodJS thereby releasing the N-terminal segment into the cytoplasm for subsequent degradation. It contributes to preserve asymmetry in the next cell cycle through sequential degradation. This chain is Metalloprotease MmpA (mmpA), found in Caulobacter vibrioides (strain ATCC 19089 / CIP 103742 / CB 15) (Caulobacter crescentus).